A 274-amino-acid chain; its full sequence is Nitrogenase iron protein (274 aa).

ATP is bound at residue 8–15; sequence GKGGIGKS. C94 is a [4Fe-4S] cluster binding site. Residue R97 is modified to ADP-ribosylarginine; by dinitrogenase reductase ADP-ribosyltransferase. C131 provides a ligand contact to [4Fe-4S] cluster.

It belongs to the NifH/BchL/ChlL family. In terms of assembly, homodimer. The cofactor is [4Fe-4S] cluster. Post-translationally, the reversible ADP-ribosylation of Arg-97 inactivates the nitrogenase reductase and regulates nitrogenase activity.

It catalyses the reaction N2 + 8 reduced [2Fe-2S]-[ferredoxin] + 16 ATP + 16 H2O = H2 + 8 oxidized [2Fe-2S]-[ferredoxin] + 2 NH4(+) + 16 ADP + 16 phosphate + 6 H(+). Functionally, the key enzymatic reactions in nitrogen fixation are catalyzed by the nitrogenase complex, which has 2 components: the iron protein and the molybdenum-iron protein. This Solidesulfovibrio magneticus (strain ATCC 700980 / DSM 13731 / RS-1) (Desulfovibrio magneticus) protein is Nitrogenase iron protein.